Here is a 696-residue protein sequence, read N- to C-terminus: Rho-related BTB domain-containing protein 1 (696 aa).

Residues 1–210 (MDADMDYERP…DNAIRAALIS (210 aa)) form a rho-like region. GTP is bound by residues 21–28 (GDNAVGKT), 84–88 (DTFGD), and 140–143 (CQLD). BTB domains follow at residues 266–427 (ADVL…DEKE) and 485–552 (SDVT…SPNL). Residues 327 to 348 (VDPEEEREEGPPRIPQADQWKS) are disordered.

The protein belongs to the small GTPase superfamily. Rho family. Ubiquitous, with highest levels in skeletal muscle, placenta, testis, stomach, and kidney, followed by uterus and adrenal gland. Expressed in a variety of fetal tissues.

The polypeptide is Rho-related BTB domain-containing protein 1 (RHOBTB1) (Homo sapiens (Human)).